Reading from the N-terminus, the 308-residue chain is Lysophosphatidic acid receptor 6 (308 aa).

Over 1–16 (MVSSNCSTEDSFKYTL) the chain is Extracellular. N-linked (GlcNAc...) asparagine glycosylation occurs at Asn-5. The chain crosses the membrane as a helical span at residues 17-43 (YGCVFSMVFVLGLIANCVAIYIFTFTL). The Cytoplasmic portion of the chain corresponds to 44–52 (KVRNETTTY). The chain crosses the membrane as a helical span at residues 53–76 (MLNLAISDLLFVFTLPFRIYYFVV). Residues 77–89 (RNWPFGDVLCKIS) are Extracellular-facing. Cysteines 86 and 165 form a disulfide. A helical transmembrane segment spans residues 90 to 109 (VTLFYTNMYGSILFLTCISV). Residues 110-130 (DRFLAIVHPFRSKTLRTKRNA) lie on the Cytoplasmic side of the membrane. A helical transmembrane segment spans residues 131-151 (RIVCVAVWITVLAGSTPASFF). Over 152 to 178 (QSTNRQNNTEQRTCFENFPESTWKTYL) the chain is Extracellular. Residues 179-206 (SRIVIFIEIVGFFIPLILNVTCSTMVLR) form a helical membrane-spanning segment. Over 207–224 (TLNKPLTLSRNKLSKKKV) the chain is Cytoplasmic. A helical transmembrane segment spans residues 225-250 (LKMIFVHLVIFCFCFVPYNITLILYS). Topologically, residues 251-269 (LMRTQTWINCSVVTAVRTM) are extracellular. Residues 270–289 (YPVTLCIAVSNCCFDPIVYY) form a helical membrane-spanning segment. The S-palmitoyl cysteine moiety is linked to residue Cys-281. Topologically, residues 290 to 308 (FTSDTNSELDKKQQVHQNT) are cytoplasmic.

This sequence belongs to the G-protein coupled receptor 1 family. As to expression, induced in activated T-cells.

The protein localises to the cell membrane. Its function is as follows. Binds to oleoyl-L-alpha-lysophosphatidic acid (LPA). Intracellular cAMP is involved in the receptor activation. In Gallus gallus (Chicken), this protein is Lysophosphatidic acid receptor 6 (LPAR6).